The primary structure comprises 226 residues: ATP synthase subunit a (226 aa).

6 helical membrane passes run 22 to 42, 73 to 93, 102 to 122, 135 to 155, 173 to 193, and 202 to 222; these read SMNW…FWLI, IIIF…SLIP, LLLN…YLIY, LNSP…SLII, LILT…PINL, and LEIF…ILYF.

Belongs to the ATPase A chain family. In terms of assembly, F-type ATPases have 2 components, CF(1) - the catalytic core - and CF(0) - the membrane proton channel. CF(1) has five subunits: alpha(3), beta(3), gamma(1), delta(1), epsilon(1). CF(0) has three main subunits: a, b and c.

It is found in the mitochondrion inner membrane. Its function is as follows. Mitochondrial membrane ATP synthase (F(1)F(0) ATP synthase or Complex V) produces ATP from ADP in the presence of a proton gradient across the membrane which is generated by electron transport complexes of the respiratory chain. F-type ATPases consist of two structural domains, F(1) - containing the extramembraneous catalytic core and F(0) - containing the membrane proton channel, linked together by a central stalk and a peripheral stalk. During catalysis, ATP synthesis in the catalytic domain of F(1) is coupled via a rotary mechanism of the central stalk subunits to proton translocation. Key component of the proton channel; it may play a direct role in the translocation of protons across the membrane. This chain is ATP synthase subunit a (ATP6), found in Apis mellifera ligustica (Common honeybee).